The sequence spans 101 residues: uncharacterized protein (101 aa).

Transmembrane regions (helical) follow at residues 35–55 (LWTMNGLIWAYWMMVLQLIII) and 66–86 (FLFFFSHLLLVPFFFFLTLLF).

It is found in the membrane. This is an uncharacterized protein from Saccharomyces cerevisiae (strain ATCC 204508 / S288c) (Baker's yeast).